A 159-amino-acid chain; its full sequence is Transcription elongation factor GreA (159 aa).

Positions 14–76 (VKKLEEELEY…QLENMLRNAN (63 aa)) form a coiled coil.

This sequence belongs to the GreA/GreB family.

Functionally, necessary for efficient RNA polymerase transcription elongation past template-encoded arresting sites. The arresting sites in DNA have the property of trapping a certain fraction of elongating RNA polymerases that pass through, resulting in locked ternary complexes. Cleavage of the nascent transcript by cleavage factors such as GreA or GreB allows the resumption of elongation from the new 3'terminus. GreA releases sequences of 2 to 3 nucleotides. The chain is Transcription elongation factor GreA from Clostridium novyi (strain NT).